A 119-amino-acid chain; its full sequence is Phosphoribosyl-AMP cyclohydrolase (119 aa).

Aspartate 77 lines the Mg(2+) pocket. A Zn(2+)-binding site is contributed by cysteine 78. Positions 79 and 81 each coordinate Mg(2+). The Zn(2+) site is built by cysteine 94 and cysteine 101.

It belongs to the PRA-CH family. As to quaternary structure, homodimer. It depends on Mg(2+) as a cofactor. Zn(2+) is required as a cofactor.

Its subcellular location is the cytoplasm. The catalysed reaction is 1-(5-phospho-beta-D-ribosyl)-5'-AMP + H2O = 1-(5-phospho-beta-D-ribosyl)-5-[(5-phospho-beta-D-ribosylamino)methylideneamino]imidazole-4-carboxamide. The protein operates within amino-acid biosynthesis; L-histidine biosynthesis; L-histidine from 5-phospho-alpha-D-ribose 1-diphosphate: step 3/9. Its function is as follows. Catalyzes the hydrolysis of the adenine ring of phosphoribosyl-AMP. This is Phosphoribosyl-AMP cyclohydrolase from Cereibacter sphaeroides (strain KD131 / KCTC 12085) (Rhodobacter sphaeroides).